A 65-amino-acid chain; its full sequence is Large ribosomal subunit protein bL35 (65 aa).

It belongs to the bacterial ribosomal protein bL35 family.

This is Large ribosomal subunit protein bL35 from Prochlorococcus marinus (strain NATL1A).